The chain runs to 339 residues: Vomeronasal type-1 receptor A14 (339 aa).

Topologically, residues 1–42 (MMGVQICQGMMSEIPFFSPPPQFSYMMNKNIRLHTDSNIRNT) are extracellular. Residues 43–63 (FFTDIGIGISANSLLLLFNIF) form a helical membrane-spanning segment. The Cytoplasmic segment spans residues 64-75 (KLTRGQRSRLTD). Residues 76 to 96 (LPIGLLSLINLLMLLMAAFIA) form a helical membrane-spanning segment. The Extracellular segment spans residues 97 to 119 (TDTFISWKGWDDIICKFLVYLYR). Cys-111 and Cys-198 are disulfide-bonded. A helical membrane pass occupies residues 120–140 (TFRGLSLCTSCLLSVLQAIIL). Residues 141-160 (SPRSSCLAKFKHKPPHHISC) lie on the Cytoplasmic side of the membrane. A helical transmembrane segment spans residues 161–181 (AILSLSVLYMFIGSHLLVSII). At 182 to 213 (ATPNLTTNDFIHVTQSCSILPMSYLMQCMFST) the chain is on the extracellular side. An N-linked (GlcNAc...) asparagine glycan is attached at Asn-185. Residues 214-234 (LLAIRDVFLISLMVLSTWYMV) form a helical membrane-spanning segment. Residues 235 to 264 (ALLCRHRKQTRHLQGTSLSPKASPEQRATR) are Cytoplasmic-facing. The helical transmembrane segment at 265–285 (SILMLMSLFVLMSVFDSIVCS) threads the bilayer. Over 286 to 296 (SRTMYLNDPIS) the chain is Extracellular. A helical membrane pass occupies residues 297 to 317 (YSIQLFMVHIYATVSPFVFIV). Over 318-339 (TEKHIVNFLRSVCEGDECLNIH) the chain is Cytoplasmic.

The protein belongs to the G-protein coupled receptor 1 family.

It is found in the cell membrane. In terms of biological role, putative pheromone receptor implicated in the regulation of social as well as reproductive behavior. In Rattus norvegicus (Rat), this protein is Vomeronasal type-1 receptor A14.